The sequence spans 90 residues: Chaplin-G (90 aa).

The signal sequence occupies residues 1–27; it reads MSRIAKAAGVALGTGAVVLSGTGMAMA. One can recognise a Chaplin domain in the interval 38 to 78; sequence SPGVLSGNVVQVPVHVPVNLCGNTIDVIGLLNPAFGNACEN. A disulfide bond links Cys-58 and Cys-76.

Belongs to the chaplin family. Short chaplin subfamily.

The protein localises to the cell surface. Its subcellular location is the secreted. The protein resides in the cell wall. Functionally, one of 8 partially redundant surface-active proteins required for efficient formation of aerial mycelium; the short chaplins assemble into a hydrophobic, amyloidal fibrillar surface layer that envelopes and protects aerial hyphae and spores, presumably anchored to the long chaplins. Chaplins have an overlapping function with the surface-active SapB peptide; chaplins are essential on minimal medium while on rich medium both chaplins and SapB are required for efficient aerial hyphae formation. Chaplins are also involved in cell attachment to a hydrophobic surface. Forms amyloid fibrils in vitro probably composed of stacked beta-sheets, at low extracellular concentrations individually restores the ability to form aerial hyphae to a chaplin-deficient strain. A small chaplin extract (ChpD, ChpE, ChpF, ChpG and ChpH) self-assembles into 2 different amyloids; small fibrils at the air-water interface form an amphipathic membrane that resembles spore-surface structures involved in aerial hyphae formation, and hydrophilic fibrils in solution that resemble the fibers that attach cells to a hydrophobic surface. At the air-water interface the hydrophilic surface is in contact with water (probably equivalent to the peptidoglycan layer), while the hydrophobic face is exposed to the air, making the surface of the aerial hyphae hydrophobic. A small chaplin extract applied to a chaplin-deficient strain restores aerial hyphae formation. The small chaplin extract forms an amyloid-like structure similar to that seen on the surface of cells without rodlets (rdlA-rdlB deletions), and is highly surface active, reducing surface tension from 72 to 26 mJ/m(2), which probably allows escape of hyphae from an aqueous environment into air. ChpF and ChpG are sufficient to restore the rodlet layer and hydrophobicity to a strain deleted for the other 6 chaplin genes. The protein is Chaplin-G of Streptomyces coelicolor (strain ATCC BAA-471 / A3(2) / M145).